A 308-amino-acid polypeptide reads, in one-letter code: Glutamyl-Q tRNA(Asp) synthetase (308 aa).

L-glutamate-binding positions include 19-23 (RFAPS) and Glu-55. The 'HIGH' region signature appears at 22–32 (PSPSGELHFGS). 4 residues coordinate Zn(2+): Cys-111, Cys-113, Tyr-125, and Cys-129. Positions 182 and 200 each coordinate L-glutamate. The 'KMSKS' region signature appears at 238 to 242 (KLSKQ). Lys-241 is a binding site for ATP.

Belongs to the class-I aminoacyl-tRNA synthetase family. GluQ subfamily. The cofactor is Zn(2+).

Its function is as follows. Catalyzes the tRNA-independent activation of glutamate in presence of ATP and the subsequent transfer of glutamate onto a tRNA(Asp). Glutamate is transferred on the 2-amino-5-(4,5-dihydroxy-2-cyclopenten-1-yl) moiety of the queuosine in the wobble position of the QUC anticodon. This chain is Glutamyl-Q tRNA(Asp) synthetase, found in Escherichia coli (strain K12 / MC4100 / BW2952).